A 99-amino-acid polypeptide reads, in one-letter code: Nucleoid-associated protein EbfC (99 aa).

This sequence belongs to the YbaB/EbfC family. In terms of assembly, homodimer.

Its subcellular location is the cytoplasm. It is found in the nucleoid. In terms of biological role, binds to DNA and alters its conformation. May be involved in regulation of gene expression, nucleoid organization and DNA protection. This is Nucleoid-associated protein EbfC from Borreliella afzelii (strain PKo) (Borrelia afzelii).